The sequence spans 337 residues: Eukaryotic translation initiation factor 3 subunit H (337 aa).

Residues 21 to 153 (VQCDGLAVMK…LKAYRLTPQA (133 aa)) enclose the MPN domain.

The protein belongs to the eIF-3 subunit H family. As to quaternary structure, component of the eukaryotic translation initiation factor 3 (eIF-3) complex.

It localises to the cytoplasm. Its function is as follows. Component of the eukaryotic translation initiation factor 3 (eIF-3) complex, which is involved in protein synthesis of a specialized repertoire of mRNAs and, together with other initiation factors, stimulates binding of mRNA and methionyl-tRNAi to the 40S ribosome. The eIF-3 complex specifically targets and initiates translation of a subset of mRNAs involved in cell proliferation. The chain is Eukaryotic translation initiation factor 3 subunit H from Bombyx mori (Silk moth).